The chain runs to 113 residues: Iron-sulfur cluster insertion protein ErpA (113 aa).

Residues Cys-41, Cys-105, and Cys-107 each coordinate iron-sulfur cluster.

The protein belongs to the HesB/IscA family. In terms of assembly, homodimer. Requires iron-sulfur cluster as cofactor.

In terms of biological role, required for insertion of 4Fe-4S clusters for at least IspG. The protein is Iron-sulfur cluster insertion protein ErpA of Actinobacillus succinogenes (strain ATCC 55618 / DSM 22257 / CCUG 43843 / 130Z).